A 264-amino-acid chain; its full sequence is MKQYLDLMRLVREHGTFKSDRTGTGTFSVFGHQMRFDLAEGFPLVTTKKCHLKSIVHELLWFLKGDTNIRYLKENGVSIWDEWADGNGDLGPVYGYQWRSWPAPDGRHIDQIANVVNMIRDNPDSRRLIVSAWNPALIDEMKLPPCHALFQFYVADGRLSCQLYQRSADIFLGVPFNIASYALLILMMAQVTGLAPGEFVWTGGDCHLYANHLEQADLQLSREPLPLPTMQLDPDVKDLFAFRFEDFELVGYQSHPHIKAPVAI.

Residue R21 participates in dUMP binding. A (6R)-5,10-methylene-5,6,7,8-tetrahydrofolate-binding site is contributed by H51. Residue 126–127 (RR) participates in dUMP binding. C146 serves as the catalytic Nucleophile. DUMP-binding positions include 166–169 (RSAD), N177, and 207–209 (HLY). Residue D169 coordinates (6R)-5,10-methylene-5,6,7,8-tetrahydrofolate. A263 contacts (6R)-5,10-methylene-5,6,7,8-tetrahydrofolate.

It belongs to the thymidylate synthase family. Bacterial-type ThyA subfamily. Homodimer.

The protein resides in the cytoplasm. It catalyses the reaction dUMP + (6R)-5,10-methylene-5,6,7,8-tetrahydrofolate = 7,8-dihydrofolate + dTMP. It functions in the pathway pyrimidine metabolism; dTTP biosynthesis. Catalyzes the reductive methylation of 2'-deoxyuridine-5'-monophosphate (dUMP) to 2'-deoxythymidine-5'-monophosphate (dTMP) while utilizing 5,10-methylenetetrahydrofolate (mTHF) as the methyl donor and reductant in the reaction, yielding dihydrofolate (DHF) as a by-product. This enzymatic reaction provides an intracellular de novo source of dTMP, an essential precursor for DNA biosynthesis. In Azotobacter vinelandii (strain DJ / ATCC BAA-1303), this protein is Thymidylate synthase.